The primary structure comprises 447 residues: Elongation factor 1-alpha (447 aa).

The tr-type G domain maps to 5–230; that stretch reads KIHISIVVIG…DQINEPKRPS (226 aa). The tract at residues 14–21 is G1; sequence GHVDSGKS. Residue 14 to 21 participates in GTP binding; it reads GHVDSGKS. Lysine 55 carries the post-translational modification N6,N6-dimethyllysine. Residues 70-74 form a G2 region; it reads GITID. Lysine 79 is subject to N6,N6,N6-trimethyllysine. The interval 91–94 is G3; sequence DAPG. GTP is bound by residues 91–95 and 153–156; these read DAPGH and NKMD. A G4 region spans residues 153–156; it reads NKMD. Lysine 187 is modified (N6,N6,N6-trimethyllysine). Residues 194–196 form a G5 region; it reads SGF. Lysine 261 carries the post-translational modification N6-methyllysine. Glutamate 289 bears the 5-glutamyl glycerylphosphorylethanolamine mark. Lysine 306 carries the post-translational modification N6,N6,N6-trimethyllysine. At glutamate 362 the chain carries 5-glutamyl glycerylphosphorylethanolamine. Residue lysine 396 is modified to N6,N6,N6-trimethyllysine.

Belongs to the TRAFAC class translation factor GTPase superfamily. Classic translation factor GTPase family. EF-Tu/EF-1A subfamily.

The protein localises to the cytoplasm. Functionally, this protein promotes the GTP-dependent binding of aminoacyl-tRNA to the A-site of ribosomes during protein biosynthesis. This is Elongation factor 1-alpha (BLT63) from Hordeum vulgare (Barley).